A 158-amino-acid polypeptide reads, in one-letter code: Large ribosomal subunit protein uL30 (158 aa).

The protein belongs to the universal ribosomal protein uL30 family. In terms of assembly, part of the 50S ribosomal subunit.

The chain is Large ribosomal subunit protein uL30 from Saccharolobus solfataricus (strain ATCC 35092 / DSM 1617 / JCM 11322 / P2) (Sulfolobus solfataricus).